The primary structure comprises 766 residues: FYVE, RhoGEF and PH domain-containing protein 4 (766 aa).

The tract at residues 1 to 150 (MEESNPAPTS…SSIANSHDEN (150 aa)) is actin filament-binding. 2 stretches are compositionally biased toward polar residues: residues 47–62 (LNIP…TSSP) and 70–85 (HSPQ…TQGQ). Disordered stretches follow at residues 47–86 (LNIP…QGQH) and 143–173 (IANS…GEPG). Positions 206-393 (KLHKIATELL…STAASHSNSA (188 aa)) constitute a DH domain. Positions 422–521 (ELIKEGQILK…WIKALQESID (100 aa)) constitute a PH 1 domain. Residues 559-619 (DNEVTMCMKC…VCKDCYQIIS (61 aa)) form an FYVE-type zinc finger. C565, C568, C582, C585, C590, C593, C611, and C614 together coordinate Zn(2+). One can recognise a PH 2 domain in the interval 643 to 740 (NSEVCSFLQY…WLKIILLAVT (98 aa)). Phosphoserine is present on residues S702 and S716. Positions 746–766 (GPSEHLATLNNLPGPKKKSEC) are disordered.

In terms of assembly, homooligomer. In terms of tissue distribution, detected in thymus, lung, heart, skeletal muscle, small intestine, liver, kidney, spleen and testis. Expressed in all parts of the brain and in the spinal cord at embryonic, postnatal, and adult stages. Levels of expression are lower in postnatal and adult tissues than in embryonic tissues.

It is found in the cytoplasm. The protein resides in the cytoskeleton. It localises to the cell projection. The protein localises to the filopodium. In terms of biological role, activates CDC42, a member of the Ras-like family of Rho- and Rac proteins, by exchanging bound GDP for free GTP. Activates MAPK8. Plays a role in regulating the actin cytoskeleton and cell shape. Promotes the formation of lamellipodia. The chain is FYVE, RhoGEF and PH domain-containing protein 4 (Fgd4) from Mus musculus (Mouse).